Consider the following 1153-residue polypeptide: Otoancorin (1153 aa).

A signal peptide spans 1–22 (MSQEPTTYSLFLFLFLSHGVSS). Residue Asn-156 is glycosylated (N-linked (GlcNAc...) asparagine). Residue Asn-211 is glycosylated (N-linked (GlcNAc...) (complex) asparagine). N-linked (GlcNAc...) asparagine glycosylation is found at Asn-244, Asn-289, Asn-321, Asn-394, Asn-398, Asn-460, Asn-544, Asn-812, Asn-911, and Asn-974. Residues 1109 to 1128 (HSWQDAPASAGPTRTSSSRS) form a disordered region. A lipid anchor (GPI-anchor amidated alanine) is attached at Ala-1130. Residues 1131–1153 (GALQSWGLWLGCPLLVLMAKLLW) constitute a propeptide, removed in mature form.

This sequence belongs to the stereocilin family.

Its subcellular location is the apical cell membrane. It localises to the secreted. The protein resides in the extracellular space. The protein localises to the extracellular matrix. Its function is as follows. May act as an adhesion molecule. The protein is Otoancorin (OTOA) of Homo sapiens (Human).